A 482-amino-acid polypeptide reads, in one-letter code: Lipoamide acyltransferase component of branched-chain alpha-keto acid dehydrogenase complex, mitochondrial (482 aa).

Residues 1–61 constitute a mitochondrion transit peptide; sequence MAAVRMLRTW…HFLKTTAALR (61 aa). The 76-residue stretch at 64 to 139 folds into the Lipoyl-binding domain; it reads VVQFKLSDIG…YVGKPLVDIE (76 aa). Lys105 carries the post-translational modification N6-lipoyllysine. Lys133 carries the N6-succinyllysine modification. The critical for association with PPM1K stretch occupies residues 145-160; that stretch reads DSEEDVVETPAVSHDE. The segment at 147 to 168 is disordered; sequence EEDVVETPAVSHDEHTHQEIKG. Over residues 157 to 168 the composition is skewed to basic and acidic residues; the sequence is SHDEHTHQEIKG. In terms of domain architecture, Peripheral subunit-binding (PSBD) spans 172-209; sequence LATPAVRRLAMENNIKLSEVVGSGKDGRILKEDILNYL. Residue Lys196 is modified to N6-acetyllysine; alternate. Lys196 carries the post-translational modification N6-succinyllysine; alternate. Lys202 bears the N6-acetyllysine mark. Position 220 is a phosphoserine (Ser220). N6-acetyllysine is present on residues Lys243 and Lys250. N6-succinyllysine is present on Lys261. The residue at position 289 (Lys289) is an N6-acetyllysine; alternate. Position 289 is an N6-succinyllysine; alternate (Lys289). Arg291 provides a ligand contact to CoA. Lys295 and Lys304 each carry N6-acetyllysine. Residues Ser306, Asp349, Gln378, Ser399, Asn400, Ser403, Gly424, and Ile426 each contribute to the CoA site. At Lys435 the chain carries N6-acetyllysine. Lys440 carries the post-translational modification N6-acetyllysine; alternate. Lys440 carries the post-translational modification N6-succinyllysine; alternate. Active-site residues include His452 and Asp456.

The protein belongs to the 2-oxoacid dehydrogenase family. Forms a 24-polypeptide structural core with octahedral symmetry that represents the E2 component of the branched-chain alpha-ketoacid dehydrogenase (BCKDH) complex. The BCKDH complex is composed of three major building blocks E1, E2 and E3. It is organized around E2, a 24-meric cubic core composed of DBT, to which are associated 6 to 12 copies of E1, and approximately 6 copies of the dehydrogenase E3, a DLD dimer. Interacts with PPM1K with a 24:1 stoichiometry; the N-terminal region (residues 49-61) of PPM1K and C-terminal linker of the lipoyl domain of DBT/E2 (residues 145-160) are critical for this interaction whereas the lipoyl prosthetic group is dispensable. This interaction requires colocalization in mitochondria. PPM1K competes with BCKDK for binding to DBT; this interaction is modulated by branched-chain alpha-keto acids (BCKAs). At steady state, BCKDH holoenzyme preferentially binds BCKDK and BCKDHA is phosphorylated. In response to high levels of BCKAs, BCKDK is replaced by PPM1K leading to BCKDHA dephosphorylation. It depends on (R)-lipoate as a cofactor.

The protein resides in the mitochondrion matrix. The catalysed reaction is N(6)-[(R)-dihydrolipoyl]-L-lysyl-[protein] + 2-methylpropanoyl-CoA = N(6)-[(R)-S(8)-2-methylpropanoyldihydrolipoyl]-L-lysyl-[protein] + CoA. The branched-chain alpha-keto dehydrogenase complex catalyzes the overall conversion of alpha-keto acids to acyl-CoA and CO(2). It contains multiple copies of three enzymatic components: branched-chain alpha-keto acid decarboxylase (E1), lipoamide acyltransferase (E2) and lipoamide dehydrogenase (E3). Within this complex, the catalytic function of this enzyme is to accept, and to transfer to coenzyme A, acyl groups that are generated by the branched-chain alpha-keto acid decarboxylase component. This Homo sapiens (Human) protein is Lipoamide acyltransferase component of branched-chain alpha-keto acid dehydrogenase complex, mitochondrial.